The following is a 196-amino-acid chain: ATP-dependent Clp protease proteolytic subunit (196 aa).

Residue Ser-101 is the Nucleophile of the active site. The active site involves His-126.

Belongs to the peptidase S14 family. As to quaternary structure, component of the chloroplastic Clp protease core complex.

Its subcellular location is the plastid. The protein localises to the chloroplast stroma. It carries out the reaction Hydrolysis of proteins to small peptides in the presence of ATP and magnesium. alpha-casein is the usual test substrate. In the absence of ATP, only oligopeptides shorter than five residues are hydrolyzed (such as succinyl-Leu-Tyr-|-NHMec, and Leu-Tyr-Leu-|-Tyr-Trp, in which cleavage of the -Tyr-|-Leu- and -Tyr-|-Trp bonds also occurs).. In terms of biological role, cleaves peptides in various proteins in a process that requires ATP hydrolysis. Has a chymotrypsin-like activity. Plays a major role in the degradation of misfolded proteins. The protein is ATP-dependent Clp protease proteolytic subunit of Barbarea verna (Land cress).